We begin with the raw amino-acid sequence, 158 residues long: NADH-quinone oxidoreductase subunit B (158 aa).

[4Fe-4S] cluster-binding residues include Cys37, Cys38, Cys102, and Cys132.

It belongs to the complex I 20 kDa subunit family. In terms of assembly, NDH-1 is composed of 14 different subunits. Subunits NuoB, C, D, E, F, and G constitute the peripheral sector of the complex. Requires [4Fe-4S] cluster as cofactor.

The protein resides in the cell inner membrane. The enzyme catalyses a quinone + NADH + 5 H(+)(in) = a quinol + NAD(+) + 4 H(+)(out). NDH-1 shuttles electrons from NADH, via FMN and iron-sulfur (Fe-S) centers, to quinones in the respiratory chain. Couples the redox reaction to proton translocation (for every two electrons transferred, four hydrogen ions are translocated across the cytoplasmic membrane), and thus conserves the redox energy in a proton gradient. This Legionella pneumophila (strain Corby) protein is NADH-quinone oxidoreductase subunit B.